Reading from the N-terminus, the 397-residue chain is Flavohemoprotein (397 aa).

The Globin domain maps to 4 to 140 (SFSPHTITLI…IANLLKDREA (137 aa)). H87 is a heme b binding site. Catalysis depends on charge relay system residues Y97 and E139. Residues 151–397 (GGWIHWRRFV…FGPMDEEMAA (247 aa)) are reductase. Residues 154-258 (IHWRRFVISK…TPPVGDFFLP (105 aa)) form the FAD-binding FR-type domain. FAD is bound by residues Y192 and 207 to 210 (RNYS). 271–276 (GVGLTP) lines the NADP(+) pocket. 387 to 390 (FFGP) lines the FAD pocket.

It belongs to the globin family. Two-domain flavohemoproteins subfamily. The protein in the C-terminal section; belongs to the flavoprotein pyridine nucleotide cytochrome reductase family. The cofactor is heme b. It depends on FAD as a cofactor.

It catalyses the reaction 2 nitric oxide + NADPH + 2 O2 = 2 nitrate + NADP(+) + H(+). It carries out the reaction 2 nitric oxide + NADH + 2 O2 = 2 nitrate + NAD(+) + H(+). Functionally, is involved in NO detoxification in an aerobic process, termed nitric oxide dioxygenase (NOD) reaction that utilizes O(2) and NAD(P)H to convert NO to nitrate, which protects the bacterium from various noxious nitrogen compounds. Therefore, plays a central role in the inducible response to nitrosative stress. This is Flavohemoprotein from Xylella fastidiosa (strain Temecula1 / ATCC 700964).